Here is a 367-residue protein sequence, read N- to C-terminus: 2-aminoethylphosphonate--pyruvate transaminase (367 aa).

N6-(pyridoxal phosphate)lysine is present on lysine 193.

Belongs to the class-V pyridoxal-phosphate-dependent aminotransferase family. PhnW subfamily. In terms of assembly, homodimer. Requires pyridoxal 5'-phosphate as cofactor.

The enzyme catalyses (2-aminoethyl)phosphonate + pyruvate = phosphonoacetaldehyde + L-alanine. In terms of biological role, involved in phosphonate degradation. The sequence is that of 2-aminoethylphosphonate--pyruvate transaminase from Vibrio parahaemolyticus serotype O3:K6 (strain RIMD 2210633).